The chain runs to 652 residues: Epithelial sodium channel subunit gamma (652 aa).

Over 1-54 (MAPGEKIKAKIKKNLPVTGPQAPNIKELMQWYCLNTNTHGCRRIVVSRGRLRRL) the chain is Cytoplasmic. Residues 55-75 (LWILFTLTAVALIFWQCALLI) form a helical membrane-spanning segment. The Extracellular segment spans residues 76–537 (SSFYTVSVSI…EQLLSNIGGQ (462 aa)). 8 disulfide bridges follow: cysteine 100–cysteine 286, cysteine 210–cysteine 217, cysteine 263–cysteine 270, cysteine 375–cysteine 460, cysteine 397–cysteine 456, cysteine 401–cysteine 452, cysteine 410–cysteine 437, and cysteine 412–cysteine 426. The interval 137-224 (RKRREAQSWS…SDCAVYTFSS (88 aa)) is gating release of inhibition by proteolysis (GRIP); protease-sensitive region that is responsible for the proteolytic activation of the channel. Asparagine 212 is a glycosylation site (N-linked (GlcNAc...) asparagine). Asparagine 500 carries N-linked (GlcNAc...) asparagine glycosylation. Residues 538-558 (LGLWMSCSVVCVIEIIEVFFI) traverse the membrane as a helical segment. At 559-652 (DSLSIIARHQ…LTDTQTTFPH (94 aa)) the chain is on the cytoplasmic side. The segment at 610–631 (SALSLPPAPGSQVPGTPPPRYN) is disordered. Positions 626 to 630 (PPPRY) match the PY motif; recruits WW domain-containing proteins and is thereby required for ubiquitination and inhibition of the channel by NEDD4 and NEDD4L motif.

The protein belongs to the amiloride-sensitive sodium channel (TC 1.A.6) family. SCNN1G subfamily. In terms of assembly, component of the heterotrimeric epithelial sodium channel (ENaC) composed of an alpha/SCNN1A, a beta/SCNN1B and a gamma/SCNN1G subunit. An additional delta/SCNN1D subunit can replace the alpha/SCNN1A subunit to form an alternative channel with specific properties. Interacts with WWP1 (via WW domains). Interacts with WWP2 (via WW domains); inhibits the channel. Interacts with the full-length immature form of PCSK9 (pro-PCSK9); inhibits ENaC by promoting its proteasomal degradation. Interacts with BPIFA1; the interaction is indirect via SCNN1B and inhibits the proteolytic maturation of SCNN1A and SCNN1G and the activation of ENaC. In terms of processing, phosphorylated on serine and threonine residues. Aldosterone and insulin increase the basal level of phosphorylation. Ubiquitinated. Can be ubiquitinated at multiple sites and undergo monoubiquitination and polyubiquitination. Ubiquitination by NEDD4 or NEDD4L inhibits the ENaC channel through endocytosis, intracellular retention and degradation of its individual subunits. Post-translationally, ENaC is activated through the proteolytic maturation of its subunits. Furin cleaves the SCNN1G subunit first, followed by cleavage by prostasin (PRSS8), which results in a stepwise increase in the open probability of the channel due to the release of an inhibitory tract. BPIFA1, which is recruited by the SCNN1B subunit, prevents the proteolytic activation of ENaC. In terms of processing, N-glycosylated. N-linked glycans are processed to complex type during ENaC complex assembly and transport to the plasma membrane.

It is found in the apical cell membrane. The catalysed reaction is Na(+)(in) = Na(+)(out). Its activity is regulated as follows. Originally identified and characterized by its inhibition by the diuretic drug amiloride. This is one of the three pore-forming subunits of the heterotrimeric epithelial sodium channel (ENaC), a critical regulator of sodium balance and fluid homeostasis. ENaC operates in epithelial tissues, where it mediates the electrodiffusion of sodium ions from extracellular fluid through the apical membrane of cells, with water following osmotically. It plays a key role in maintaining sodium homeostasis through electrogenic sodium reabsorption in the kidneys. Additionally, ENaC is essential for airway surface liquid homeostasis, which is crucial for proper mucus clearance. The polypeptide is Epithelial sodium channel subunit gamma (Bos taurus (Bovine)).